A 381-amino-acid chain; its full sequence is E3 ubiquitin-protein ligase KCMF1 (381 aa).

Serine 2 carries the post-translational modification N-acetylserine. The residue at position 2 (serine 2) is a Phosphoserine. The ZZ-type zinc-finger motif lies at 4-60 (HEGVSCDACLKGNFRGRRYKCLICYDYDLCASCYESGATTTRHTTDHPMQCILTRVD). Residues cysteine 9, cysteine 12, cysteine 24, cysteine 27, cysteine 33, cysteine 36, histidine 46, and histidine 50 each coordinate Zn(2+). The C2H2-type zinc finger occupies 78–101 (FTCPYCGKMGYTETSLQEHVTSEH). The tract at residues 154–193 (MFHPGRGLGGPRARRSNMHFTSSSTGGLSSSQSSYSPSNR) is disordered. Serine 169, serine 189, and serine 212 each carry phosphoserine. Over residues 175–191 (SSSTGGLSSSQSSYSPS) the composition is skewed to low complexity. Residues 224–257 (ASQLQQLQMQLQLERQHAQAARQQLETARNATRR) are a coiled coil. Over residues 250 to 285 (TARNATRRTNTSSVTTTITQSTATTNTANTESSQQT) the composition is skewed to low complexity. Disordered stretches follow at residues 250-314 (TARN…SERA) and 329-348 (VREE…ADFG). Residues 297 to 314 (NDPKMSETERQSMESERA) are compositionally biased toward basic and acidic residues. A phosphoserine mark is found at serine 335 and serine 336.

Belongs to the KCMF1 family. As to quaternary structure, component of the SIFI complex, composed of KCMF1, UBR4 and calmodulin (CALM1, CALM2 or CALM3).

The protein resides in the cytoplasm. The protein localises to the late endosome. It localises to the lysosome. It carries out the reaction S-ubiquitinyl-[E2 ubiquitin-conjugating enzyme]-L-cysteine + [acceptor protein]-L-lysine = [E2 ubiquitin-conjugating enzyme]-L-cysteine + N(6)-ubiquitinyl-[acceptor protein]-L-lysine.. The protein operates within protein modification; protein ubiquitination. Functionally, E3 ubiquitin-protein ligase which accepts ubiquitin from an E2 ubiquitin-conjugating enzyme and then transfers it to targeted substrates, promoting their degradation by the proteasome. Together with UBR4, component of the N-end rule pathway: ubiquitinates proteins bearing specific N-terminal residues that are destabilizing according to the N-end rule, leading to their degradation. Does not ubiquitinate proteins that are acetylated at the N-terminus. Together with UBR4, part of a protein quality control pathway that catalyzes ubiquitination and degradation of proteins that have been oxidized in response to reactive oxygen species (ROS): recognizes proteins with an Arg-CysO3(H) degron at the N-terminus, and mediates assembly of heterotypic 'Lys-63'-/'Lys-27'-linked branched ubiquitin chains on oxidized proteins, leading to their degradation by autophagy. Catalytic component of the SIFI complex, a multiprotein complex required to inhibit the mitochondrial stress response after a specific stress event has been resolved: ubiquitinates and degrades (1) components of the HRI-mediated signaling of the integrated stress response, such as DELE1 and EIF2AK1/HRI, as well as (2) unimported mitochondrial precursors. Within the SIFI complex, UBR4 initiates ubiquitin chain that are further elongated or branched by KCMF1. The polypeptide is E3 ubiquitin-protein ligase KCMF1 (KCMF1) (Bos taurus (Bovine)).